Here is a 161-residue protein sequence, read N- to C-terminus: Nucleotide-binding protein Pnec_0318 (161 aa).

Belongs to the YajQ family.

Its function is as follows. Nucleotide-binding protein. This is Nucleotide-binding protein Pnec_0318 from Polynucleobacter necessarius subsp. necessarius (strain STIR1).